A 774-amino-acid chain; its full sequence is Pentatricopeptide repeat-containing protein At4g20770 (774 aa).

PPR repeat units follow at residues 5–39 (GNKY…GMKS), 40–70 (DTYL…MSVR), 71–101 (DVYS…MPER), 102–136 (DVVS…GFLP), 137–171 (SRFT…GLDK), 172–203 (NIFV…LSQP), 204–238 (NEVS…GVQV), 239–270 (DSVC…LGKQ), 283–313 (DLHL…MPEV), 314–348 (NVVS…GFQP), 349–379 (NEVT…IPQP), 380–414 (SVSA…NLKP), 415–449 (DKTT…EISK), 450–480 (NSHI…CINE), 482–516 (DIAC…AVLC), 518–552 (NETS…GYVS), 553–583 (DSFV…VLRK), 584–618 (NTVI…GEKP), 619–654 (DGIT…GIEP), and 655–685 (ELDH…TPYK). The segment at 690-765 (LWEILLSSCR…TPGQSWTTYG (76 aa)) is type E motif.

The protein belongs to the PPR family. PCMP-E subfamily.

In Arabidopsis thaliana (Mouse-ear cress), this protein is Pentatricopeptide repeat-containing protein At4g20770 (PCMP-E35).